A 379-amino-acid polypeptide reads, in one-letter code: Homoserine O-succinyltransferase (379 aa).

Residues 51-360 enclose the AB hydrolase-1 domain; it reads NAVLICHALS…DAPQGHDAFL (310 aa). The Nucleophile role is filled by serine 157. Position 227 (arginine 227) interacts with substrate. Residues aspartate 323 and histidine 356 contribute to the active site. Aspartate 357 lines the substrate pocket.

It belongs to the AB hydrolase superfamily. MetX family. Homodimer.

It is found in the cytoplasm. The catalysed reaction is L-homoserine + succinyl-CoA = O-succinyl-L-homoserine + CoA. It functions in the pathway amino-acid biosynthesis; L-methionine biosynthesis via de novo pathway; O-succinyl-L-homoserine from L-homoserine: step 1/1. In terms of biological role, transfers a succinyl group from succinyl-CoA to L-homoserine, forming succinyl-L-homoserine. In Pseudomonas aeruginosa (strain LESB58), this protein is Homoserine O-succinyltransferase.